A 1529-amino-acid chain; its full sequence is Mediator of RNA polymerase II transcription subunit 1.1 (1529 aa).

3 disordered regions span residues 685-740, 807-919, and 933-1529; these read PDAA…VVGE, QYRM…MRDN, and PDIE…IDDE. Basic residues predominate over residues 693–702; the sequence is GKQRKPRAKK. Composition is skewed to low complexity over residues 722-739 and 807-828; these read GAAA…GVVG and QYRM…PQQQ. A compositionally biased stretch (pro residues) spans 894 to 905; it reads TPSPLSAPPKPF. The span at 908 to 919 shows a compositional bias: basic and acidic residues; the sequence is EQHHFGTKMRDN. Composition is skewed to low complexity over residues 958–990 and 1008–1023; these read SSSS…TAQT and QEQA…IQQQ. Positions 1008-1032 form a coiled coil; sequence QEQALQKQEQQRIQQQDSVDSTNSE. Composition is skewed to polar residues over residues 1051–1061, 1068–1089, and 1096–1105; these read NQVNRVMNMSN, GSST…STGS, and TPGTSSNIAQ. Basic and acidic residues-rich tracts occupy residues 1113–1130, 1137–1185, 1192–1240, and 1262–1278; these read LKKE…EKLI, LKVD…ERDK, RDRT…KELS, and PKKD…KDES. The stretch at 1169–1202 forms a coiled coil; that stretch reads EKEDKSQREKDKKERDKERKRRDRDRTEAKKEKD. Residues 1279–1288 are compositionally biased toward low complexity; sequence IPGPSTSSES. Positions 1289–1304 are enriched in basic and acidic residues; sequence STRKEVAPAPISRKES. Residues 1349 to 1365 show a composition bias toward low complexity; the sequence is SYSGSSNAGPISSSSRG. 2 stretches are compositionally biased toward pro residues: residues 1375 to 1386 and 1477 to 1500; these read PVLPPPALPMRG and QPPP…APPS.

The protein belongs to the Mediator complex subunit 1 family. Component of the Mediator complex.

Its subcellular location is the nucleus. In terms of biological role, component of the Mediator complex, a coactivator involved in the regulated transcription of nearly all RNA polymerase II-dependent genes. Mediator functions as a bridge to convey information from gene-specific regulatory proteins to the basal RNA polymerase II transcription machinery. Mediator is recruited to promoters by direct interactions with regulatory proteins and serves as a scaffold for the assembly of a functional preinitiation complex with RNA polymerase II and the general transcription factors. The polypeptide is Mediator of RNA polymerase II transcription subunit 1.1 (sop-3) (Caenorhabditis briggsae).